The chain runs to 1011 residues: Beta-galactosidase A (1011 aa).

The signal sequence occupies residues 1-19 (MKLLSSWVVAALAAQAAGA). Substrate is bound by residues Y96, 140 to 142 (NAE), and N199. Catalysis depends on E200, which acts as the Proton donor. Cystine bridges form between C205–C206 and C267–C316. The Nucleophile role is filled by E299. Y365 contacts substrate. 7 N-linked (GlcNAc...) asparagine glycosylation sites follow: N374, N456, N625, N707, N763, N780, and N917.

The protein belongs to the glycosyl hydrolase 35 family. In terms of assembly, monomer.

It localises to the secreted. The enzyme catalyses Hydrolysis of terminal non-reducing beta-D-galactose residues in beta-D-galactosides.. In terms of biological role, cleaves beta-linked terminal galactosyl residues from gangliosides, glycoproteins, and glycosaminoglycans. Has high in vitro transglycosylation activity with p-nitrophenyl-beta-D-galactopyranoside, methyl-beta-D-galactopyranoside or lactose as a donor and galactose as an acceptor. The sequence is that of Beta-galactosidase A (lacA) from Penicillium sp.